Here is a 206-residue protein sequence, read N- to C-terminus: Large ribosomal subunit protein eL13 (206 aa).

The span at 184 to 193 (EKTNQKWDGK) shows a compositional bias: basic and acidic residues. Residues 184–206 (EKTNQKWDGKRKAKAQAAAEPKA) form a disordered region.

Belongs to the eukaryotic ribosomal protein eL13 family.

In Tetrahymena thermophila (strain SB210), this protein is Large ribosomal subunit protein eL13 (RPL13).